We begin with the raw amino-acid sequence, 128 residues long: Lymphocyte antigen 6 complex locus protein G5c (128 aa).

A signal peptide spans 1–29 (MGAEYGCLPSTSQALYVILLIVLVRMSLV). A UPAR/Ly6 domain is found at 37-128 (LRCYRCLLET…NPQNRVFYIP (92 aa)). 5 cysteine pairs are disulfide-bonded: Cys39–Cys66, Cys42–Cys51, Cys58–Cys85, Cys94–Cys111, and Cys112–Cys117. Asn73 is a glycosylation site (N-linked (GlcNAc...) asparagine).

In terms of assembly, forms oligomers. Post-translationally, N-glycosylated. Abundantly expressed in the epididymis.

It is found in the secreted. Functionally, may have a role in hematopoietic cell differentiation. The chain is Lymphocyte antigen 6 complex locus protein G5c (LY6G5C) from Canis lupus familiaris (Dog).